The primary structure comprises 174 residues: Negative modulator of initiation of replication (174 aa).

It belongs to the SeqA family. Homodimer. Polymerizes to form helical filaments.

The protein localises to the cytoplasm. Functionally, negative regulator of replication initiation, which contributes to regulation of DNA replication and ensures that replication initiation occurs exactly once per chromosome per cell cycle. Binds to pairs of hemimethylated GATC sequences in the oriC region, thus preventing assembly of replication proteins and re-initiation at newly replicated origins. Repression is relieved when the region becomes fully methylated. This is Negative modulator of initiation of replication from Pseudoalteromonas atlantica (strain T6c / ATCC BAA-1087).